The primary structure comprises 186 residues: Acireductone dioxygenase (186 aa).

The disordered stretch occupies residues 1-21 (MSRLSIFPDGSTSMDQSSPTP). Over residues 10-20 (GSTSMDQSSPT) the composition is skewed to polar residues. H103, H105, E109, and H147 together coordinate Fe(2+). H103, H105, E109, and H147 together coordinate Ni(2+).

It belongs to the acireductone dioxygenase (ARD) family. In terms of assembly, monomer. It depends on Fe(2+) as a cofactor. Ni(2+) is required as a cofactor.

The catalysed reaction is 1,2-dihydroxy-5-(methylsulfanyl)pent-1-en-3-one + O2 = 3-(methylsulfanyl)propanoate + CO + formate + 2 H(+). It catalyses the reaction 1,2-dihydroxy-5-(methylsulfanyl)pent-1-en-3-one + O2 = 4-methylsulfanyl-2-oxobutanoate + formate + 2 H(+). It functions in the pathway amino-acid biosynthesis; L-methionine biosynthesis via salvage pathway; L-methionine from S-methyl-5-thio-alpha-D-ribose 1-phosphate: step 5/6. In terms of biological role, catalyzes 2 different reactions between oxygen and the acireductone 1,2-dihydroxy-3-keto-5-methylthiopentene (DHK-MTPene) depending upon the metal bound in the active site. Fe-containing acireductone dioxygenase (Fe-ARD) produces formate and 2-keto-4-methylthiobutyrate (KMTB), the alpha-ketoacid precursor of methionine in the methionine recycle pathway. Ni-containing acireductone dioxygenase (Ni-ARD) produces methylthiopropionate, carbon monoxide and formate, and does not lie on the methionine recycle pathway. The polypeptide is Acireductone dioxygenase (Synechococcus sp. (strain CC9902)).